We begin with the raw amino-acid sequence, 972 residues long: Glycine dehydrogenase (decarboxylating) (972 aa).

Lys-713 carries the N6-(pyridoxal phosphate)lysine modification.

Belongs to the GcvP family. As to quaternary structure, the glycine cleavage system is composed of four proteins: P, T, L and H. It depends on pyridoxal 5'-phosphate as a cofactor.

It carries out the reaction N(6)-[(R)-lipoyl]-L-lysyl-[glycine-cleavage complex H protein] + glycine + H(+) = N(6)-[(R)-S(8)-aminomethyldihydrolipoyl]-L-lysyl-[glycine-cleavage complex H protein] + CO2. The glycine cleavage system catalyzes the degradation of glycine. The P protein binds the alpha-amino group of glycine through its pyridoxal phosphate cofactor; CO(2) is released and the remaining methylamine moiety is then transferred to the lipoamide cofactor of the H protein. This Aromatoleum aromaticum (strain DSM 19018 / LMG 30748 / EbN1) (Azoarcus sp. (strain EbN1)) protein is Glycine dehydrogenase (decarboxylating).